Here is a 90-residue protein sequence, read N- to C-terminus: Movement protein (90 aa).

The helical transmembrane segment at 32-52 (FVFVTFGLLIAVGVAWLAYTL) threads the bilayer.

It belongs to the mastrevirus movement protein family. In terms of assembly, interacts with the capsid protein (CP). Part of a MP-CP-viral DNA complex.

Its subcellular location is the host membrane. Involved in the viral transport within, and between cells. The protein is Movement protein of Wheat dwarf virus (isolate Sweden) (WDV).